The primary structure comprises 356 residues: Thiamine thiazole synthase, chloroplastic (356 aa).

The N-terminal 51 residues, 1-51, are a transit peptide targeting the chloroplast; the sequence is MAAMASTAFAPSVSSTTNKLFDSSFHGAPMSPSLLRLQPIKSSRPNNLSIS. Substrate contacts are provided by residues Ala-101, 121 to 122, Gly-129, and Ala-194; that span reads EQ. 2,3-didehydroalanine (Cys) is present on Cys-223. Substrate contacts are provided by residues Asp-225, His-240, Met-292, and 302 to 304; that span reads RMG.

Belongs to the THI4 family. Homooctamer. It depends on Fe cation as a cofactor. In terms of processing, during the catalytic reaction, a sulfide is transferred from Cys-223 to a reaction intermediate, generating a dehydroalanine residue.

It is found in the plastid. The protein resides in the chloroplast. The enzyme catalyses [ADP-thiazole synthase]-L-cysteine + glycine + NAD(+) = [ADP-thiazole synthase]-dehydroalanine + ADP-5-ethyl-4-methylthiazole-2-carboxylate + nicotinamide + 3 H2O + 2 H(+). Functionally, involved in biosynthesis of the thiamine precursor thiazole. Catalyzes the conversion of NAD and glycine to adenosine diphosphate 5-(2-hydroxyethyl)-4-methylthiazole-2-carboxylic acid (ADT), an adenylated thiazole intermediate. The reaction includes an iron-dependent sulfide transfer from a conserved cysteine residue of the protein to a thiazole intermediate. The enzyme can only undergo a single turnover, which suggests it is a suicide enzyme. May have additional roles in adaptation to various stress conditions and in DNA damage tolerance. This Citrus sinensis (Sweet orange) protein is Thiamine thiazole synthase, chloroplastic.